The primary structure comprises 950 residues: 2-oxoglutarate dehydrogenase E1 component (950 aa).

Belongs to the alpha-ketoglutarate dehydrogenase family. Homodimer. Part of the 2-oxoglutarate dehydrogenase (OGDH) complex composed of E1 (2-oxoglutarate dehydrogenase), E2 (dihydrolipoamide succinyltransferase) and E3 (dihydrolipoamide dehydrogenase); the complex contains multiple copies of the three enzymatic components (E1, E2 and E3). Thiamine diphosphate serves as cofactor.

The catalysed reaction is N(6)-[(R)-lipoyl]-L-lysyl-[protein] + 2-oxoglutarate + H(+) = N(6)-[(R)-S(8)-succinyldihydrolipoyl]-L-lysyl-[protein] + CO2. Its function is as follows. E1 component of the 2-oxoglutarate dehydrogenase (OGDH) complex which catalyzes the decarboxylation of 2-oxoglutarate, the first step in the conversion of 2-oxoglutarate to succinyl-CoA and CO(2). In Cupriavidus necator (strain ATCC 17699 / DSM 428 / KCTC 22496 / NCIMB 10442 / H16 / Stanier 337) (Ralstonia eutropha), this protein is 2-oxoglutarate dehydrogenase E1 component (odhA).